A 307-amino-acid polypeptide reads, in one-letter code: Malonyl-[acyl-carrier protein] O-methyltransferase (307 aa).

Belongs to the methyltransferase superfamily.

It catalyses the reaction malonyl-[ACP] + S-adenosyl-L-methionine = malonyl-[ACP] methyl ester + S-adenosyl-L-homocysteine. Its pathway is cofactor biosynthesis; biotin biosynthesis. Its function is as follows. Converts the free carboxyl group of a malonyl-thioester to its methyl ester by transfer of a methyl group from S-adenosyl-L-methionine (SAM). It allows to synthesize pimeloyl-ACP via the fatty acid synthetic pathway. The polypeptide is Malonyl-[acyl-carrier protein] O-methyltransferase (Nitrosospira multiformis (strain ATCC 25196 / NCIMB 11849 / C 71)).